A 206-amino-acid chain; its full sequence is dCTP deaminase, dUMP-forming (206 aa).

DCTP contacts are provided by residues 117–122 (RSSFGR), Asp135, 143–145 (TLE), Gln163, Tyr177, Lys184, and Gln188. Catalysis depends on Glu145, which acts as the Proton donor/acceptor.

It belongs to the dCTP deaminase family. Homotrimer.

The enzyme catalyses dCTP + 2 H2O = dUMP + NH4(+) + diphosphate. The protein operates within pyrimidine metabolism; dUMP biosynthesis; dUMP from dCTP: step 1/1. Functionally, bifunctional enzyme that catalyzes both the deamination of dCTP to dUTP and the hydrolysis of dUTP to dUMP without releasing the toxic dUTP intermediate. This chain is dCTP deaminase, dUMP-forming, found in Methanococcus maripaludis (strain C6 / ATCC BAA-1332).